The sequence spans 215 residues: Probable transaldolase (215 aa).

The active-site Schiff-base intermediate with substrate is Lys84.

Belongs to the transaldolase family. Type 3B subfamily.

The protein localises to the cytoplasm. The catalysed reaction is D-sedoheptulose 7-phosphate + D-glyceraldehyde 3-phosphate = D-erythrose 4-phosphate + beta-D-fructose 6-phosphate. It participates in carbohydrate degradation; pentose phosphate pathway; D-glyceraldehyde 3-phosphate and beta-D-fructose 6-phosphate from D-ribose 5-phosphate and D-xylulose 5-phosphate (non-oxidative stage): step 2/3. In terms of biological role, transaldolase is important for the balance of metabolites in the pentose-phosphate pathway. The polypeptide is Probable transaldolase (Exiguobacterium sibiricum (strain DSM 17290 / CCUG 55495 / CIP 109462 / JCM 13490 / 255-15)).